The following is a 455-amino-acid chain: T-box protein VegT (455 aa).

The segment at residues 57-230 (LWAQFHQEGT…HNPFAKGFRE (174 aa)) is a DNA-binding region (T-box). Residues 229-241 (REQERSHKRDDVL) are compositionally biased toward basic and acidic residues. Disordered stretches follow at residues 229–276 (REQE…RVKE) and 295–360 (ANQG…PDSD). Residues 308 to 326 (GANQEQQVPSSSSNFYNRN) are compositionally biased toward polar residues.

As to quaternary structure, forms a repression complex on the promoters of the nodal/nr1 and siamois genes with the maternal factors tcf7l1/tcf3 and pouf5.1/oct-25. Interacts (via C-terminus) with tcf7l1/tcf3 (via N-terminus). Also interacts with the other POU-domain transcription factors pou5f1.2/oct-91 and pou5f1.3/oct-60. In terms of tissue distribution, vegetally localized in oocytes and expressed in the presumptive endoderm and mesoderm at early gastrula stage. Expression is down-regulated in the endoderm by the end of gastrulation but maintained in the lateral and ventral mesoderm of the blastopore lip.

It localises to the nucleus. Its function is as follows. Transcription factor required for both mesoderm and endoderm formation in the embryo; signaling determinants and concentration levels may determine which germ layer is formed. Acts together with beta-catenin to activate genes that are responsible for mesoderm induction including wnt-8, eomes t/bra, siamois, mix1 and sox17. Directly binds to promoter DNA. Patterns the mesoderm along the dorsoventral and posterior axis. Activates siamois gene transcription when alone or in combination with beta-catenin, but inhibits siamois transcription in combination with pou5f1.1/oct-25. The protein is T-box protein VegT of Xenopus tropicalis (Western clawed frog).